A 253-amino-acid polypeptide reads, in one-letter code: Beta-crystallin B1 (253 aa).

The span at 1-18 (MSQPAAKASATAAVNPGP) shows a compositional bias: low complexity. The disordered stretch occupies residues 1 to 53 (MSQPAAKASATAAVNPGPDGKGKAGPPPGPAPGSGPAPAPAPAPAQPAPAAKA). Serine 2 is modified (N-acetylserine). An N-terminal arm region spans residues 2–59 (SQPAAKASATAAVNPGPDGKGKAGPPPGPAPGSGPAPAPAPAPAQPAPAAKAELPPGS). Residues 25 to 47 (GPPPGPAPGSGPAPAPAPAPAQP) show a composition bias toward pro residues. Beta/gamma crystallin 'Greek key' domains are found at residues 60–99 (YKLV…IVTS) and 100–144 (GPWV…RPIK). The connecting peptide stretch occupies residues 145-149 (MDAQE). Beta/gamma crystallin 'Greek key' domains lie at 150 to 191 (HKLC…RVSS) and 192 to 234 (GTWV…RRLR). The tract at residues 236 to 253 (RQWHREGCFPVLAAEPPK) is C-terminal arm.

Belongs to the beta/gamma-crystallin family. As to quaternary structure, homo/heterodimer, or complexes of higher-order. The structure of beta-crystallin oligomers seems to be stabilized through interactions between the N-terminal arms. Specific cleavages in the N-terminal arm occur during lens maturation and give rise to truncated forms, leading to impaired oligomerization and protein insolubilization.

In terms of biological role, crystallins are the dominant structural components of the vertebrate eye lens. In Bos taurus (Bovine), this protein is Beta-crystallin B1 (CRYBB1).